We begin with the raw amino-acid sequence, 839 residues long: Transient receptor potential cation channel subfamily V member 1 (839 aa).

Positions 1 to 60 (MEKWASLDSDESEPPAQENSCPDPPDRDPNSKPPPAKPHIFATRSRTRLFGKGDSEEASP) are disordered. Residues 1–433 (MEKWASLDSD…QDKWDRFVKR (433 aa)) lie on the Cytoplasmic side of the membrane. The stretch at 111–139 (RLYDRRSIFDAVAQSNCQELESLLSFLQK) is one ANK 1 repeat. ATP is bound at residue arginine 116. Serine 117 carries the phosphoserine; by PKA and PKD modification. Threonine 145 is subject to Phosphothreonine; by PKA; in vitro. The ANK 2 repeat unit spans residues 154 to 186 (TGKTCLLKAMLNLHNGQNDTIALLLDIARKTDS). ATP is bound by residues lysine 156, lysine 161, asparagine 165, 200-203 (YKGQ), and 211-212 (ER). ANK repeat units lie at residues 204-229 (TALHIAIERRNMALVTLLVENGADVQ), 250-277 (ELPLSLAACTNQLAIVKFLLQNSWQPAD), 286-322 (NTVLHALVEVADNTADNTKFVTNMYNEILILGAKLHP), and 336-359 (TPLALAASSGKIGVLAYILQREIH). Threonine 371 is modified (phosphothreonine; by PKA; in vitro). One copy of the ANK 7 repeat lies at 394–416 (NSVLEVIAYSSSETPNRHDMLLV). Residues 434–455 (IFYFNFFVYCLYMIIFTTAAYY) traverse the membrane as a helical segment. Residues 456-472 (RPVEGLPPYKLNNTVGD) are Extracellular-facing. The chain crosses the membrane as a helical span at residues 473–497 (YFRVTGEILSVSGGVYFFFRGIQYF). Residues 498-510 (LQRRPSLKSLFVD) are Cytoplasmic-facing. Serine 503 carries the phosphoserine; by PKC/PRKCE modification. Residues 511-532 (SYSEILFFVQSLFMLVSVVLYF) traverse the membrane as a helical segment. 512–513 (YS) is a binding site for resiniferatoxin. The Extracellular segment spans residues 533–535 (SHR). Residues 536–556 (KEYVASMVFSLAMGWTNMLYY) form a helical membrane-spanning segment. Resiniferatoxin is bound by residues threonine 551 and arginine 558. At 557–559 (TRG) the chain is on the cytoplasmic side. Residues 560–598 (FQQMGIYAVMIEKMILRDLCRFMFVYLVFLFGFSTAVVT) traverse the membrane as a helical segment. At 599–630 (LIEDGKNNSLPVESPPHKCRGSACRPGNSYNS) the chain is on the extracellular side. Residue asparagine 605 is glycosylated (N-linked (GlcNAc...) asparagine). An intramembrane region (pore-forming) is located at residues 631 to 652 (LYSTCLELFKFTIGMGDLEFTE). Glycine 644 provides a ligand contact to Na(+). The short motif at 644-647 (GMGD) is the Selectivity filter element. Aspartate 647 contacts Ca(2+). Residues 653–656 (NYDF) are Extracellular-facing. A helical membrane pass occupies residues 657–683 (KAVFIILLLAYVILTYILLLNMLIALM). The Cytoplasmic segment spans residues 684–839 (GETVNKIAQE…FKDSMAPGEK (156 aa)). Residues 685-713 (ETVNKIAQESKNIWKLQRAITILDTEKSF) are AD. A Phosphothreonine modification is found at threonine 705. Positions 768 to 802 (EGVKRTLSFSLRSGRVSGRNWKNFALVPLLRDAST) are interaction with calmodulin. Serine 775 bears the Phosphoserine mark. The interval 778-793 (LRSGRVSGRNWKNFAL) is required for PIP2-mediated channel inhibition. Serine 801 is modified (phosphoserine; by PKC/PRKCE and PKC/PRKCZ). Positions 802–815 (TRDRHSTQPEEVQL) are enriched in basic and acidic residues. The disordered stretch occupies residues 802 to 839 (TRDRHSTQPEEVQLKHYTGSLKPEDAEVFKDSMAPGEK). Serine 821 is modified (phosphoserine). A compositionally biased stretch (basic and acidic residues) spans 823-839 (KPEDAEVFKDSMAPGEK).

This sequence belongs to the transient receptor (TC 1.A.4) family. TrpV subfamily. TRPV1 sub-subfamily. In terms of assembly, homotetramer. May also form a heteromeric channel with TRPV3. Interacts with CALM, PRKCM and CSK. Interacts with PRKCG and NTRK1, probably by forming a trimeric complex. Interacts with PIRT. Interacts with the Scolopendra mutilans RhTx toxin. Interacts with TMEM100. Interacts with PACS2. In terms of processing, phosphorylation by PKA reverses capsaicin-induced dephosphorylation at multiple sites probably including Ser-117 as a major phosphorylation site. Phosphorylation by CAMKII seems to regulate binding to vanilloids. Phosphorylated and modulated by PRKCE, PRKCM and probably PRKCZ. Dephosphorylation by calcineurin seems to lead to receptor desensitization and phosphorylation by CAMKII recovers activity. Detected in neurons in the root ganglia (at protein level). Detected in dorsal root ganglia.

The protein resides in the postsynaptic cell membrane. It is found in the cell projection. Its subcellular location is the dendritic spine membrane. It localises to the cell membrane. The enzyme catalyses Ca(2+)(in) = Ca(2+)(out). It catalyses the reaction Mg(2+)(in) = Mg(2+)(out). It carries out the reaction Na(+)(in) = Na(+)(out). The catalysed reaction is K(+)(in) = K(+)(out). With respect to regulation, the channel is sensitized by ATP binding. Repeated stimulation with capsaicin gives rise to progressively smaller responses, due to desensitization. This desensitization is triggered by the influx of calcium ions and is inhibited by elevated ATP levels. Ca(2+) and CALM displace ATP from its binding site and trigger a conformation change that leads to a closed, desensitized channel. The double-knot toxin (DkTx) from the Chinese earth tiger tarantula activates the channel and traps it in an open conformation. The Scolopendra mutilans RhTx toxin potentiates the heat activation pathway mediated by this channel by binding to the charge-rich outer pore region (in an activated state). Channel activity is activated via the interaction with PIRT and phosphatidylinositol 4,5-bisphosphate (PIP2). Both PIRT and PIP2 are required to activate channel activity. Intracellular PIP2 inhibits desensitization. Non-selective calcium permeant cation channel involved in detection of noxious chemical and thermal stimuli. Seems to mediate proton influx and may be involved in intracellular acidosis in nociceptive neurons. Involved in mediation of inflammatory pain and hyperalgesia. Sensitized by a phosphatidylinositol second messenger system activated by receptor tyrosine kinases, which involves PKC isozymes and PCL. Activation by vanilloids, like capsaicin, and temperatures higher than 42 degrees Celsius. Upon activation, exhibits a time- and Ca(2+)-dependent outward rectification, followed by a long-lasting refractory state. Mild extracellular acidic pH (6.5) potentiates channel activation by noxious heat and vanilloids, whereas acidic conditions (pH &lt;6) directly activate the channel. Can be activated by endogenous compounds, including 12-hydroperoxytetraenoic acid and bradykinin. Acts as ionotropic endocannabinoid receptor with central neuromodulatory effects. Triggers a form of long-term depression (TRPV1-LTD) mediated by the endocannabinoid anandamine in the hippocampus and nucleus accumbens by affecting AMPA receptors endocytosis. This chain is Transient receptor potential cation channel subfamily V member 1 (Trpv1), found in Mus musculus (Mouse).